A 196-amino-acid chain; its full sequence is Large ribosomal subunit protein uL10 (196 aa).

The segment at 163-196 (GAPAAAEAPAAEEAPAAEAAETEAPAEAAATEEN) is disordered. The span at 164–196 (APAAAEAPAAEEAPAAEAAETEAPAEAAATEEN) shows a compositional bias: low complexity.

It belongs to the universal ribosomal protein uL10 family. In terms of assembly, part of the ribosomal stalk of the 50S ribosomal subunit. The N-terminus interacts with L11 and the large rRNA to form the base of the stalk. The C-terminus forms an elongated spine to which L12 dimers bind in a sequential fashion forming a multimeric L10(L12)X complex.

Forms part of the ribosomal stalk, playing a central role in the interaction of the ribosome with GTP-bound translation factors. The protein is Large ribosomal subunit protein uL10 of Arthrobacter sp. (strain FB24).